Consider the following 419-residue polypeptide: DNA primase DnaG (419 aa).

The 77-residue stretch at 168–244 (DTIIVVEGRS…KVDYVARAPE (77 aa)) folds into the Toprim domain. 3 residues coordinate Mg(2+): Glu174, Asp218, and Asp220. Composition is skewed to basic and acidic residues over residues 280–291 (KPAEEAVKREEE) and 306–316 (KAAKPPEEKPP). Residues 280–317 (KPAEEAVKREEEAAAEAKPPAPAVQEKAAKPPEEKPPT) form a disordered region.

The protein belongs to the archaeal DnaG primase family. Forms a ternary complex with MCM helicase and DNA. Component of the archaeal exosome complex. The cofactor is Mg(2+).

The enzyme catalyses ssDNA + n NTP = ssDNA/pppN(pN)n-1 hybrid + (n-1) diphosphate.. Functionally, RNA polymerase that catalyzes the synthesis of short RNA molecules used as primers for DNA polymerase during DNA replication. Also part of the exosome, which is a complex involved in RNA degradation. Acts as a poly(A)-binding protein that enhances the interaction between heteromeric, adenine-rich transcripts and the exosome. The protein is DNA primase DnaG of Aeropyrum pernix (strain ATCC 700893 / DSM 11879 / JCM 9820 / NBRC 100138 / K1).